We begin with the raw amino-acid sequence, 421 residues long: Galactooligosaccharide-binding protein (421 aa).

The signal sequence occupies residues 1 to 22; that stretch reads MKMAKKCSVFMLCAAVSLSLAA. The N-palmitoyl cysteine moiety is linked to residue Cys23. Cys23 is lipidated: S-diacylglycerol cysteine. Residues 393 to 421 are disordered; sequence ATGKADPKQALDQAAETAKGQIKAKHSGK.

It belongs to the bacterial solute-binding protein 1 family. In terms of assembly, the complex is composed of two ATP-binding proteins (MsmX), two transmembrane proteins (GanP and GanQ) and a solute-binding protein (GanS).

It localises to the cell membrane. Its function is as follows. Involved in galactan degradation. Part of the ABC transporter complex GanPQS involved in the uptake of galactooligosaccharides. Binds mainly galactotetraose and galactotriose. The polypeptide is Galactooligosaccharide-binding protein (Bacillus subtilis (strain 168)).